Here is a 304-residue protein sequence, read N- to C-terminus: Bifunctional protein FolD (304 aa).

NADP(+) is bound by residues 167 to 169, Ser192, and Ile233; that span reads GRS.

The protein belongs to the tetrahydrofolate dehydrogenase/cyclohydrolase family. In terms of assembly, homodimer.

The enzyme catalyses (6R)-5,10-methylene-5,6,7,8-tetrahydrofolate + NADP(+) = (6R)-5,10-methenyltetrahydrofolate + NADPH. It catalyses the reaction (6R)-5,10-methenyltetrahydrofolate + H2O = (6R)-10-formyltetrahydrofolate + H(+). It functions in the pathway one-carbon metabolism; tetrahydrofolate interconversion. Catalyzes the oxidation of 5,10-methylenetetrahydrofolate to 5,10-methenyltetrahydrofolate and then the hydrolysis of 5,10-methenyltetrahydrofolate to 10-formyltetrahydrofolate. The chain is Bifunctional protein FolD from Rhodospirillum centenum (strain ATCC 51521 / SW).